A 175-amino-acid chain; its full sequence is Adenine phosphoribosyltransferase (175 aa).

Belongs to the purine/pyrimidine phosphoribosyltransferase family. In terms of assembly, homodimer.

The protein resides in the cytoplasm. It catalyses the reaction AMP + diphosphate = 5-phospho-alpha-D-ribose 1-diphosphate + adenine. It functions in the pathway purine metabolism; AMP biosynthesis via salvage pathway; AMP from adenine: step 1/1. Functionally, catalyzes a salvage reaction resulting in the formation of AMP, that is energically less costly than de novo synthesis. The sequence is that of Adenine phosphoribosyltransferase from Lacticaseibacillus paracasei (strain ATCC 334 / BCRC 17002 / CCUG 31169 / CIP 107868 / KCTC 3260 / NRRL B-441) (Lactobacillus paracasei).